A 159-amino-acid chain; its full sequence is uncharacterized protein (159 aa).

2 helical membrane-spanning segments follow: residues 17–37 (ALFI…TILV) and 40–60 (LLQF…FKKY).

The protein resides in the cell membrane. This is an uncharacterized protein from Borreliella burgdorferi (strain ATCC 35210 / DSM 4680 / CIP 102532 / B31) (Borrelia burgdorferi).